We begin with the raw amino-acid sequence, 229 residues long: Vacuolar protein sorting-associated protein 24 homolog 1 (229 aa).

Residues 15 to 60 (KQLLRDWQRKLRQECRNIERQIRDIQKEERNVQKAIKEAAKRNDMV) adopt a coiled-coil conformation. The tract at residues 193–215 (VPAQKASTSREEEAVAEGVDDEE) is disordered. A compositionally biased stretch (acidic residues) spans 206-215 (AVAEGVDDEE).

Belongs to the SNF7 family. Component of the endosomal sorting required for transport complex III (ESCRT-III), composed at least of VPS2, VPS20, VPS24 and VPS32. Interacts with SKD1.

It localises to the endosome. In terms of biological role, component of the ESCRT-III complex, which is required for multivesicular bodies (MVBs) formation and sorting of endosomal cargo proteins into MVBs. The ESCRT-III complex is probably involved in the concentration of MVB cargo. The polypeptide is Vacuolar protein sorting-associated protein 24 homolog 1 (VPS24-1) (Arabidopsis thaliana (Mouse-ear cress)).